The sequence spans 855 residues: Protein KRI1 homolog (855 aa).

Disordered stretches follow at residues 47-67 (VSESEFDSDSSSSEEDEVDPK), 82-117 (KDPCIYDKGTKFFSESSGDEDDKDGEAPKKKKKAKP), 130-196 (EHNG…KTKE), 312-342 (SLRRTDDKRKEKRKELKERKDQEKQQKMKEL), 424-453 (YDPRQHANGGGEDYEGHCEDDDFNMDCDYD), and 589-855 (KSLY…KKDN). Residues 48-64 (SESEFDSDSSSSEEDEV) are compositionally biased toward acidic residues. A compositionally biased stretch (basic and acidic residues) spans 82–91 (KDPCIYDKGT). A phosphoserine mark is found at Ser95, Ser97, Ser98, Ser137, and Ser138. The segment covering 160 to 176 (EEERRLKAEFRKVMNKE) has biased composition (basic and acidic residues). Residue Ser179 is modified to Phosphoserine. The stretch at 307-362 (RTIEQSLRRTDDKRKEKRKELKERKDQEKQQKMKELELVKEMKRKEIDEKIRKLKA) forms a coiled coil. The segment covering 441–452 (CEDDDFNMDCDY) has biased composition (acidic residues). Over residues 609–619 (VTPAEATAPAE) the composition is skewed to low complexity. Over residues 630–640 (KSKRKRLKRKA) the composition is skewed to basic residues. Basic and acidic residues-rich tracts occupy residues 650–664 (VLKEESDSKDPKEAD) and 674–692 (SSKKKVDTPSKKGKDDANQ). Composition is skewed to polar residues over residues 720 to 748 (VQNGFQKPQNQANKSAKTKSNQPFKTTES), 756 to 773 (SNGNNPFNKPQSKSQQRQ), and 792 to 805 (ANGTNPFKKSNQKP). Low complexity predominate over residues 812 to 826 (KKTNNFKAKNKQNNN). The segment covering 842-855 (RKFHKREKYGKKDN) has biased composition (basic residues).

The protein belongs to the KRI1 family.

The protein is Protein KRI1 homolog of Drosophila melanogaster (Fruit fly).